The following is a 182-amino-acid chain: Ferritin heavy chain (182 aa).

N-acetylmethionine is present on M1. N-acetylthreonine; in Ferritin heavy chain, N-terminally processed is present on T2. Residues 11–160 form the Ferritin-like diiron domain; the sequence is QNYHQDSEAA…DHVTNLRKMG (150 aa). Residues E28, E63, H66, E108, and Q142 each contribute to the Fe cation site.

Belongs to the ferritin family. As to quaternary structure, oligomer of 24 subunits. There are two types of subunits: L (light) chain and H (heavy) chain. The major chain can be light or heavy, depending on the species and tissue type. The functional molecule forms a roughly spherical shell with a diameter of 12 nm and contains a central cavity into which the insoluble mineral iron core is deposited. Interacts with NCOA4; NCOA4 promotes targeting of the iron-binding ferritin complex to autolysosomes following starvation or iron depletion.

The protein resides in the cytoplasm. The protein localises to the lysosome. Its subcellular location is the cytoplasmic vesicle. It localises to the autophagosome. It catalyses the reaction 4 Fe(2+) + O2 + 4 H(+) = 4 Fe(3+) + 2 H2O. Its function is as follows. Stores iron in a soluble, non-toxic, readily available form. Important for iron homeostasis. Has ferroxidase activity. Iron is taken up in the ferrous form and deposited as ferric hydroxides after oxidation. Also plays a role in delivery of iron to cells. Mediates iron uptake in capsule cells of the developing kidney. Delivery to lysosomes is mediated by the cargo receptor NCOA4 for autophagic degradation and release of iron. The protein is Ferritin heavy chain (Fth1) of Rattus norvegicus (Rat).